Consider the following 1036-residue polypeptide: MGGPAAARTGAGGLRALLLALVAAGVPAGAYNLDAQRPVRFQGPSGSFFGYAVLEHFHDNTRWVLVGAPKADSKYSTSVKSPGAVFKCRVHTNPDRRCTELDMARGRTRGAPCGKTCRGDRDDEWMGVSLARQPRADGRVLACAHRWKNIYYEADHILPHGFCYLIPSNLQAKGKVLIPCYEEYKKKYGEEHGSCQAGIAGFFTEELVVMGAPGSFYWAGTLKVLNLTDNTYFKLNDEAIMNRRYTYLGYAVTAGHFSHPSITDVVGGAPQDEGIGKVYIFRADRRSGTLIKIFQASGKKMGSYFGSSLCAVDLNMDGLSDLLVGAPMFSEIRDEGQVTVYLNQGHGALEEQLTLTGDAAYNAHFGESIANLGDIDDDGFPDVAVGAPKEEDFAGAVYIYHGDANGIVPKYSMKLSGRRLNPTLRMFGQSISGGIDMDGNGYPDVTIGAFLSDSVVLLRARPVITVDVSIFLPGSINITAPQCHDGQQPVNCLNVTVCFRFHGKNVPGEIGLNYNLTADVAQKEKGQLPRVYFVLFGETAGQVSERLQLSHMDEVCHHYVAHVKRRVQDVISPIVFEAAYSLDEHVMGEEDRELPDLTPVLRWKKGQRISQKNQTVFERNCQSEDCAADLQLRGKLLLSSVDEKTPHLALGAVKNISLNISISNLGDDAYDANVSFNVSRELFFINMWQKEEMGISCELLESDFLKCSVGFPFMRSKSKYEFSVIFDTSHLSGEEEILSFIVTAQSGNLERSEALHDNTLTLTVPLVHEVDTSITGIVSPTSFVYGESVDASNFIQLDDQECHFQPVNITLQVYNMGPSTLPGSSVSISFPSRLSPGGAEMFQVQDMVVSQEKGNCSLQRNPTPCIIPQEQENIFHTIFAFFSKSGRKVLDCEKPGSFCLTLHCNLSALPKEESRTINLYMLLNTEILKKDSSSVIQFMARAKVKVEPALRVVEIANGNPEETLVVFEALHNLEPRGYVVGWIIAISLLVGILIFLLLAVLLWKMGFFRRRYKEIIEAEKNRKENEDGWDWVQKNQ.

The first 28 residues, 1 to 28 (MGGPAAARTGAGGLRALLLALVAAGVPA), serve as a signal peptide directing secretion. The Extracellular portion of the chain corresponds to 29–981 (GAYNLDAQRP…NLEPRGYVVG (953 aa)). FG-GAP repeat units follow at residues 36–97 (QRPV…PDRR), 109–175 (RGAP…AKGK), 183–233 (EYKK…NTYF), 234–290 (KLND…SGTL), 291–350 (IKIF…GALE), 352–409 (QLTL…GIVP), and 412–475 (SMKL…LPGS). Intrachain disulfides connect C88-C98, C143-C163, and C180-C195. Residue N226 is glycosylated (N-linked (GlcNAc...) asparagine). Residues D313, N315, D317, D321, D374, D376, D378, D382, D436, D438, N440, and D444 each contribute to the Ca(2+) site. A disulfide bridge connects residues C483 and C492. Residues N494 and N515 are each glycosylated (N-linked (GlcNAc...) asparagine). Disulfide bonds link C498/C556, C621/C626, and C697/C707. A glycan (N-linked (GlcNAc...) asparagine) is linked at N808. 2 disulfide bridges follow: C856–C892 and C899–C904. A helical transmembrane segment spans residues 982–1002 (WIIAISLLVGILIFLLLAVLL). Topologically, residues 1003–1036 (WKMGFFRRRYKEIIEAEKNRKENEDGWDWVQKNQ) are cytoplasmic. The GFFKR motif signature appears at 1006-1010 (GFFRR).

The protein belongs to the integrin alpha chain family. In terms of assembly, heterodimer of an alpha and a beta subunit. Alpha-9 (ITGA9) associates with beta-1 (ITGB1). Integrin ITGA9:ITGB1 interacts with FBLN5 (via N-terminus). Integrin ITGA9:ITGB1 interacts with SPP1/OPN (via N-terminus). Integrin ITGA9:ITGB1 interacts with TNC/TNFN3 (via the 3rd Fibronectin type-III domain). Integrin ITGA9:ITGB1 interacts with SVEP1/polydom (via Sushi domain 21); thereby inhibits Ca(2+) intracellular signaling and as a result represses vasocontraction. Expressed in the media layer of the arterial wall (at protein level). Expressed in the airway epithelium, skeletal muscle, basal keratincytes, the basal epithelium of the cornea, hepatocytes, giant cells in the spleen and smooth muscle of the stomach, duodenum and veins (at protein level).

The protein resides in the membrane. In terms of biological role, integrin alpha-9/beta-1 (ITGA9:ITGB1) is a receptor for VCAM1, cytotactin and osteopontin. It recognizes the sequence A-E-I-D-G-I-E-L in cytotactin. ITGA9:ITGB1 may play a crucial role in SVEP1/polydom-mediated myoblast cell adhesion. Integrin ITGA9:ITGB1 represses PRKCA-mediated L-type voltage-gated channel Ca(2+) influx and ROCK-mediated calcium sensitivity in vascular smooth muscle cells via its interaction with SVEP1, thereby inhibiting vasocontraction. This chain is Integrin alpha-9, found in Mus musculus (Mouse).